Consider the following 306-residue polypeptide: Recombination-associated protein RdgC (306 aa).

It belongs to the RdgC family.

Its subcellular location is the cytoplasm. The protein resides in the nucleoid. In terms of biological role, may be involved in recombination. This chain is Recombination-associated protein RdgC, found in Pseudomonas putida (strain ATCC 47054 / DSM 6125 / CFBP 8728 / NCIMB 11950 / KT2440).